The following is a 543-amino-acid chain: MTAEDILLRERTSTTTQRPVNSEQYLNVQLATAPVKNFQTTSEISRQTLVDTSNDDVYSIKNLKGSRNPISPSVSNVGFQSIFHTVDHPRSKVSVASNHSLRSNDNASAATSKSGSSQIGESHSVDTVECSNNLSKKLSSDAISITQKSLHSTPSGRYMKGKASGFFNRRNRAHTTISSDPASFLTDSSTLHNSSHSFRNVIKNFFQNKSHRHIGQDAIEPAIPNSLSKFLHSSYGRHKSPSQFIHTNAGQLVDSGTSVYSLNVNPSGVNPNTIVEDPLSGTDPASPNPVSMLHDLLRNLPSLEANYKHFNSQELTTLTNNIWNIFCSNVAELFRTQRIWKLRAKIENFNEVLEFYCILKTDPRVTHSGMNRIISDLKEFLVSSLYNLENQIVFNYSNEDTINNALKRLGVIWRIFYQEVYYDLAAVLLPLDQSIREDGNSTVLKSGNESRTHINGNYSIGFLLLMCFRDSIVLPCYENFVNSNDGISKSFQLYIFNQEEESNVTETDKLTLLQCFGILSTIQSNDRNQRIIEELLAGIRMSI.

Tyr-58 bears the Phosphotyrosine mark. Residue Ser-59 is modified to Phosphoserine. Positions 93–126 (VSVASNHSLRSNDNASAATSKSGSSQIGESHSVD) are disordered. Polar residues predominate over residues 94 to 121 (SVASNHSLRSNDNASAATSKSGSSQIGE). Residues Ser-139 and Ser-144 each carry the phosphoserine modification.

This sequence belongs to the BIT61 family. As to quaternary structure, the target of rapamycin complex 2 (TORC2) is composed of at least AVO1, AVO2, BIT61, LST8, TOR2 and TSC11. TORC2 forms a homodimer. Contrary to TORC1, TORC2 does not bind to and is not sensitive to FKBP-rapamycin.

It is found in the cell membrane. It localises to the vacuole membrane. Its function is as follows. Component of TORC2, which regulates cell cycle-dependent polarization of the actin-cytoskeleton and cell wall integrity. TORC2 controls polarity of the actin cytoskeleton, which is required for orienting the secretory pathway toward discrete growth sites, via the RHO1/PKC1/MAPK cell integrity pathway. The chain is Target of rapamycin complex 2 subunit BIT61 (BIT61) from Saccharomyces cerevisiae (strain ATCC 204508 / S288c) (Baker's yeast).